Here is a 98-residue protein sequence, read N- to C-terminus: NADH-ubiquinone oxidoreductase chain 4L (98 aa).

Helical transmembrane passes span Met-1 to Met-21, Ser-29 to Leu-49, and Ile-61 to Val-81.

This sequence belongs to the complex I subunit 4L family. Core subunit of respiratory chain NADH dehydrogenase (Complex I) which is composed of 45 different subunits.

It is found in the mitochondrion inner membrane. The enzyme catalyses a ubiquinone + NADH + 5 H(+)(in) = a ubiquinol + NAD(+) + 4 H(+)(out). Core subunit of the mitochondrial membrane respiratory chain NADH dehydrogenase (Complex I) which catalyzes electron transfer from NADH through the respiratory chain, using ubiquinone as an electron acceptor. Part of the enzyme membrane arm which is embedded in the lipid bilayer and involved in proton translocation. This Hippopotamus amphibius (Hippopotamus) protein is NADH-ubiquinone oxidoreductase chain 4L (MT-ND4L).